The chain runs to 277 residues: MDKILSGKTVAIDIKGQIKSYTEELKASGKSLKISSILVGDDGGSVYYQNFQEKLANNLGIDFEKIKLDESISEENLKLKIEELNKDDSVNGIMLLLPLPKHIDERAVTNLIDADKDLDCLSEVSVGRFYKGEKCFMPCTPNSVITLLKAYNIEIEGKEVVIIGRSNIVGKPLFQMFLNENATVTVCHSRTKNLKEVCKRADILVVAIGRANFIDSSYVREGAVVIDVGTSEVNGKITGDVNFDDVYDKASLITPVPGGVGSLTTTLLLKNVCKELD.

NADP(+) contacts are provided by residues 164–166, serine 189, and threonine 230; that span reads GRS.

This sequence belongs to the tetrahydrofolate dehydrogenase/cyclohydrolase family. Homodimer.

It carries out the reaction (6R)-5,10-methylene-5,6,7,8-tetrahydrofolate + NADP(+) = (6R)-5,10-methenyltetrahydrofolate + NADPH. The enzyme catalyses (6R)-5,10-methenyltetrahydrofolate + H2O = (6R)-10-formyltetrahydrofolate + H(+). It functions in the pathway one-carbon metabolism; tetrahydrofolate interconversion. Catalyzes the oxidation of 5,10-methylenetetrahydrofolate to 5,10-methenyltetrahydrofolate and then the hydrolysis of 5,10-methenyltetrahydrofolate to 10-formyltetrahydrofolate. The protein is Bifunctional protein FolD of Clostridium perfringens (strain 13 / Type A).